Here is an 859-residue protein sequence, read N- to C-terminus: Protein SEY1 (859 aa).

Topologically, residues 1–742 are cytoplasmic; that stretch reads MMMNSHFAGV…KRSAIGGITQ (742 aa). The region spanning 49-291 is the GB1/RHD3-type G domain; it reads GFNYHLISVF…FQPQYHRRIP (243 aa). GTP is bound at residue 59–66; it reads GSQSTGKS. Residues 476–496 are a coiled coil; sequence FEHELKVYRKDLDDVSGRLRK. Residues 525–544 are disordered; that stretch reads LGTGRGGSGAPEHGERPPSE. Residues 743 to 763 traverse the membrane as a helical segment; it reads VPLYFYGLLVALGWNEIVAVL. The Lumenal portion of the chain corresponds to 764–766; that stretch reads RNP. The helical transmembrane segment at 767 to 787 threads the bilayer; it reads VYFIFLILCAVGAYVTYTLNL. Over 788–859 the chain is Cytoplasmic; it reads WGPMIRMGNA…DAEVEDLDDI (72 aa). The disordered stretch occupies residues 816–859; the sequence is SSESGRQAMAMSGNQPRGESVRMNRLNGNGKKDEDAEVEDLDDI. Over residues 850–859 the composition is skewed to acidic residues; sequence DAEVEDLDDI.

This sequence belongs to the TRAFAC class dynamin-like GTPase superfamily. GB1/RHD3 GTPase family. RHD3 subfamily.

Its subcellular location is the endoplasmic reticulum membrane. Its function is as follows. Cooperates with the reticulon proteins and tubule-shaping DP1 family proteins to generate and maintain the structure of the tubular endoplasmic reticulum network. Has GTPase activity, which is required for its function in ER organization. The sequence is that of Protein SEY1 from Phaeosphaeria nodorum (strain SN15 / ATCC MYA-4574 / FGSC 10173) (Glume blotch fungus).